The primary structure comprises 332 residues: Glycerol-3-phosphate dehydrogenase [NAD(P)+] (332 aa).

Ser11, Phe12, Lys32, and Lys106 together coordinate NADPH. Lys106, Gly137, and Ser139 together coordinate sn-glycerol 3-phosphate. Residue Ala141 participates in NADPH binding. 5 residues coordinate sn-glycerol 3-phosphate: Lys192, Asp245, Ser255, Arg256, and Asn257. Lys192 (proton acceptor) is an active-site residue. NADPH is bound at residue Arg256. NADPH contacts are provided by Val280 and Glu282.

This sequence belongs to the NAD-dependent glycerol-3-phosphate dehydrogenase family.

Its subcellular location is the cytoplasm. The catalysed reaction is sn-glycerol 3-phosphate + NAD(+) = dihydroxyacetone phosphate + NADH + H(+). It catalyses the reaction sn-glycerol 3-phosphate + NADP(+) = dihydroxyacetone phosphate + NADPH + H(+). It functions in the pathway membrane lipid metabolism; glycerophospholipid metabolism. In terms of biological role, catalyzes the reduction of the glycolytic intermediate dihydroxyacetone phosphate (DHAP) to sn-glycerol 3-phosphate (G3P), the key precursor for phospholipid synthesis. This chain is Glycerol-3-phosphate dehydrogenase [NAD(P)+], found in Staphylococcus epidermidis (strain ATCC 35984 / DSM 28319 / BCRC 17069 / CCUG 31568 / BM 3577 / RP62A).